A 260-amino-acid polypeptide reads, in one-letter code: tRNA pseudouridine synthase A (260 aa).

Residue aspartate 51 is the Nucleophile of the active site. Tyrosine 109 is a substrate binding site.

Belongs to the tRNA pseudouridine synthase TruA family. In terms of assembly, homodimer.

It carries out the reaction uridine(38/39/40) in tRNA = pseudouridine(38/39/40) in tRNA. Formation of pseudouridine at positions 38, 39 and 40 in the anticodon stem and loop of transfer RNAs. The chain is tRNA pseudouridine synthase A from Methylibium petroleiphilum (strain ATCC BAA-1232 / LMG 22953 / PM1).